Reading from the N-terminus, the 284-residue chain is Diaminopimelate epimerase (284 aa).

Residues Asn13 and Asn70 each coordinate substrate. The active-site Proton donor is Cys79. Residues 80 to 81 (GN), Asn167, Asn200, and 218 to 219 (ER) each bind substrate. Cys227 serves as the catalytic Proton acceptor. Substrate is bound at residue 228 to 229 (GT).

Belongs to the diaminopimelate epimerase family. As to quaternary structure, homodimer.

Its subcellular location is the cytoplasm. The catalysed reaction is (2S,6S)-2,6-diaminopimelate = meso-2,6-diaminopimelate. The protein operates within amino-acid biosynthesis; L-lysine biosynthesis via DAP pathway; DL-2,6-diaminopimelate from LL-2,6-diaminopimelate: step 1/1. Catalyzes the stereoinversion of LL-2,6-diaminopimelate (L,L-DAP) to meso-diaminopimelate (meso-DAP), a precursor of L-lysine and an essential component of the bacterial peptidoglycan. The sequence is that of Diaminopimelate epimerase from Prochlorococcus marinus (strain NATL1A).